The sequence spans 363 residues: Probable dual-specificity RNA methyltransferase RlmN (363 aa).

The active-site Proton acceptor is E99. The 237-residue stretch at 105-341 (SENRMTACVS…VTVRKSHGAS (237 aa)) folds into the Radical SAM core domain. Residues C112 and C346 are joined by a disulfide bond. 3 residues coordinate [4Fe-4S] cluster: C119, C123, and C126. Residues 171–172 (GE), S204, 227–229 (SLH), and N303 each bind S-adenosyl-L-methionine. C346 acts as the S-methylcysteine intermediate in catalysis.

Belongs to the radical SAM superfamily. RlmN family. The cofactor is [4Fe-4S] cluster.

The protein localises to the cytoplasm. It carries out the reaction adenosine(2503) in 23S rRNA + 2 reduced [2Fe-2S]-[ferredoxin] + 2 S-adenosyl-L-methionine = 2-methyladenosine(2503) in 23S rRNA + 5'-deoxyadenosine + L-methionine + 2 oxidized [2Fe-2S]-[ferredoxin] + S-adenosyl-L-homocysteine. The catalysed reaction is adenosine(37) in tRNA + 2 reduced [2Fe-2S]-[ferredoxin] + 2 S-adenosyl-L-methionine = 2-methyladenosine(37) in tRNA + 5'-deoxyadenosine + L-methionine + 2 oxidized [2Fe-2S]-[ferredoxin] + S-adenosyl-L-homocysteine. In terms of biological role, specifically methylates position 2 of adenine 2503 in 23S rRNA and position 2 of adenine 37 in tRNAs. This chain is Probable dual-specificity RNA methyltransferase RlmN, found in Chlorobium phaeobacteroides (strain DSM 266 / SMG 266 / 2430).